Consider the following 585-residue polypeptide: Eukaryotic translation initiation factor 3 subunit D (585 aa).

The segment covering 110-130 has biased composition (gly residues); the sequence is GGGTVFRGRGQRGVGQRGGRA. The interval 110–152 is disordered; that stretch reads GGGTVFRGRGQRGVGQRGGRAGFQRVGAGRGQGGDRYYDNRSA. Positions 300-314 are RNA gate; the sequence is SIDLVTVNENAADAP. The disordered stretch occupies residues 560-585; it reads VPPNTFEEDDEAAEEQEEKAEDESEE. Positions 565–585 are enriched in acidic residues; sequence FEEDDEAAEEQEEKAEDESEE.

The protein belongs to the eIF-3 subunit D family. As to quaternary structure, component of the eukaryotic translation initiation factor 3 (eIF-3) complex.

It localises to the cytoplasm. Its function is as follows. mRNA cap-binding component of the eukaryotic translation initiation factor 3 (eIF-3) complex, which is involved in protein synthesis of a specialized repertoire of mRNAs and, together with other initiation factors, stimulates binding of mRNA and methionyl-tRNAi to the 40S ribosome. The eIF-3 complex specifically targets and initiates translation of a subset of mRNAs involved in cell proliferation. In the eIF-3 complex, eif3d specifically recognizes and binds the 7-methylguanosine cap of a subset of mRNAs. The sequence is that of Eukaryotic translation initiation factor 3 subunit D from Aspergillus fumigatus (strain CBS 144.89 / FGSC A1163 / CEA10) (Neosartorya fumigata).